The chain runs to 155 residues: Fibroblast growth factor 1 (155 aa).

Position 2 is an N-acetylalanine (A2). Residues 2 to 15 (AEGEITTFSALTER) constitute a propeptide that is removed on maturation. Residue N33 participates in heparin binding. The interval 127–143 (KKNGSCKRGPRTHYGQK) is heparin-binding.

It belongs to the heparin-binding growth factors family. In terms of assembly, monomer. Homodimer. Interacts with FGFR1, FGFR2, FGFR3 and FGFR4. Affinity between fibroblast growth factors (FGFs) and their receptors is increased by heparan sulfate glycosaminoglycans that function as coreceptors. Found in a complex with FGFBP1, FGF1 and FGF2. Interacts with FGFBP1. Part of a Cu(2+)-dependent multiprotein aggregate containing FGF1, S100A13 and SYT1. Interacts with SYT1. Interacts with S100A13. Interacts with LRRC59. Interacts with CSNKA, CSNKB and FIBP. While binding with LRRC59, CSNKA and FIBP seem mutually exclusive, CSNKB and FIBP may cooperatively interact with FGF1. Forms a ternary complex with FGFR1 and ITGAV:ITGB3 and induces the recruitment of PTPN11 to the complex. In the nucleus, phosphorylated by PKC/PRKCD.

The protein localises to the secreted. It is found in the cytoplasm. Its subcellular location is the cell cortex. It localises to the cytosol. The protein resides in the nucleus. Functionally, plays an important role in the regulation of cell survival, cell division, angiogenesis, cell differentiation and cell migration. Functions as a potent mitogen in vitro. Acts as a ligand for FGFR1 and integrins. Binds to FGFR1 in the presence of heparin leading to FGFR1 dimerization and activation via sequential autophosphorylation on tyrosine residues which act as docking sites for interacting proteins, leading to the activation of several signaling cascades. Binds to integrin ITGAV:ITGB3. Its binding to integrin, subsequent ternary complex formation with integrin and FGFR1, and the recruitment of PTPN11 to the complex are essential for FGF1 signaling. Induces the phosphorylation and activation of FGFR1, FRS2, MAPK3/ERK1, MAPK1/ERK2 and AKT1. Can induce angiogenesis. The polypeptide is Fibroblast growth factor 1 (FGF1) (Mesocricetus auratus (Golden hamster)).